The sequence spans 250 residues: Proteasome subunit alpha type-7-B (250 aa).

A Glycyl lysine isopeptide (Lys-Gly) (interchain with G-Cter in ubiquitin) cross-link involves residue Lys-62.

The protein belongs to the peptidase T1A family. As to quaternary structure, component of the 20S core complex of the 26S proteasome. The 26S proteasome is composed of a core protease (CP), known as the 20S proteasome, capped at one or both ends by the 19S regulatory particle (RP/PA700). The 20S proteasome core is composed of 28 subunits that are arranged in four stacked rings, resulting in a barrel-shaped structure. The two end rings are each formed by seven alpha subunits, and the two central rings are each formed by seven beta subunits. The catalytic chamber with the active sites is on the inside of the barrel.

The protein resides in the cytoplasm. It is found in the nucleus. Its function is as follows. The proteasome is a multicatalytic proteinase complex which is characterized by its ability to cleave peptides with Arg, Phe, Tyr, Leu, and Glu adjacent to the leaving group at neutral or slightly basic pH. The proteasome has an ATP-dependent proteolytic activity. This Arabidopsis thaliana (Mouse-ear cress) protein is Proteasome subunit alpha type-7-B (PAD2).